A 40-amino-acid polypeptide reads, in one-letter code: Photosystem II reaction center protein J (40 aa).

Met-2 is modified (N-acetylmethionine). At 2–11 the chain is on the cytoplasmic side; the sequence is MSEGGRIPLW. Residues 12–26 traverse the membrane as a helical segment; it reads IVATVAGMGVIVIVG. Topologically, residues 27–40 are lumenal; sequence LFFYGAYAGLGSSL.

This sequence belongs to the PsbJ family. In terms of assembly, PSII is composed of 1 copy each of membrane proteins PsbA, PsbB, PsbC, PsbD, PsbE, PsbF, PsbH, PsbI, PsbJ, PsbK, PsbL, PsbM, PsbT, PsbX, PsbY, PsbZ, Psb30/Ycf12, peripheral proteins PsbO, CyanoQ (PsbQ), PsbU, PsbV and a large number of cofactors. It forms dimeric complexes. It depends on PSII binds multiple chlorophylls, carotenoids and specific lipids. as a cofactor.

It is found in the cellular thylakoid membrane. In terms of biological role, one of the components of the core complex of photosystem II (PSII). PSII is a light-driven water:plastoquinone oxidoreductase that uses light energy to abstract electrons from H(2)O, generating O(2) and a proton gradient subsequently used for ATP formation. It consists of a core antenna complex that captures photons, and an electron transfer chain that converts photonic excitation into a charge separation. Functionally, may play a regulatory role in PSII biogenesis. In Thermosynechococcus vestitus (strain NIES-2133 / IAM M-273 / BP-1), this protein is Photosystem II reaction center protein J.